The chain runs to 1063 residues: DNA-directed RNA polymerase subunit beta (1063 aa).

It belongs to the RNA polymerase beta chain family. In plastids the minimal PEP RNA polymerase catalytic core is composed of four subunits: alpha, beta, beta', and beta''. When a (nuclear-encoded) sigma factor is associated with the core the holoenzyme is formed, which can initiate transcription.

Its subcellular location is the plastid. It is found in the chloroplast. The enzyme catalyses RNA(n) + a ribonucleoside 5'-triphosphate = RNA(n+1) + diphosphate. Functionally, DNA-dependent RNA polymerase catalyzes the transcription of DNA into RNA using the four ribonucleoside triphosphates as substrates. In Zygnema circumcarinatum (Green alga), this protein is DNA-directed RNA polymerase subunit beta.